Here is a 217-residue protein sequence, read N- to C-terminus: Pyrrolidone-carboxylate peptidase (217 aa).

Residues glutamate 78, cysteine 141, and histidine 168 contribute to the active site.

Belongs to the peptidase C15 family. In terms of assembly, homotetramer.

It is found in the cytoplasm. The catalysed reaction is Release of an N-terminal pyroglutamyl group from a polypeptide, the second amino acid generally not being Pro.. Its function is as follows. Removes 5-oxoproline from various penultimate amino acid residues except L-proline. The chain is Pyrrolidone-carboxylate peptidase from Treponema denticola (strain ATCC 35405 / DSM 14222 / CIP 103919 / JCM 8153 / KCTC 15104).